Consider the following 271-residue polypeptide: Phosphoribosylformylglycinamidine synthase subunit PurQ (271 aa).

The Glutamine amidotransferase type-1 domain maps to 7-253 (KVAVLRMEGT…FGYQVGRREG (247 aa)). Residue cysteine 104 is the Nucleophile of the active site. Active-site residues include histidine 238 and glutamate 240.

As to quaternary structure, part of the FGAM synthase complex composed of 1 PurL, 1 PurQ and 2 PurS subunits.

Its subcellular location is the cytoplasm. The enzyme catalyses N(2)-formyl-N(1)-(5-phospho-beta-D-ribosyl)glycinamide + L-glutamine + ATP + H2O = 2-formamido-N(1)-(5-O-phospho-beta-D-ribosyl)acetamidine + L-glutamate + ADP + phosphate + H(+). The catalysed reaction is L-glutamine + H2O = L-glutamate + NH4(+). It participates in purine metabolism; IMP biosynthesis via de novo pathway; 5-amino-1-(5-phospho-D-ribosyl)imidazole from N(2)-formyl-N(1)-(5-phospho-D-ribosyl)glycinamide: step 1/2. Functionally, part of the phosphoribosylformylglycinamidine synthase complex involved in the purines biosynthetic pathway. Catalyzes the ATP-dependent conversion of formylglycinamide ribonucleotide (FGAR) and glutamine to yield formylglycinamidine ribonucleotide (FGAM) and glutamate. The FGAM synthase complex is composed of three subunits. PurQ produces an ammonia molecule by converting glutamine to glutamate. PurL transfers the ammonia molecule to FGAR to form FGAM in an ATP-dependent manner. PurS interacts with PurQ and PurL and is thought to assist in the transfer of the ammonia molecule from PurQ to PurL. The protein is Phosphoribosylformylglycinamidine synthase subunit PurQ of Archaeoglobus fulgidus (strain ATCC 49558 / DSM 4304 / JCM 9628 / NBRC 100126 / VC-16).